The primary structure comprises 339 residues: UDP-N-acetylglucosamine--N-acetylmuramyl-(pentapeptide) pyrophosphoryl-undecaprenol N-acetylglucosamine transferase (339 aa).

Residues 11 to 13 (TGG), asparagine 127, arginine 170, serine 188, isoleucine 235, and glutamine 280 contribute to the UDP-N-acetyl-alpha-D-glucosamine site.

It belongs to the glycosyltransferase 28 family. MurG subfamily.

The protein localises to the cell inner membrane. It carries out the reaction di-trans,octa-cis-undecaprenyl diphospho-N-acetyl-alpha-D-muramoyl-L-alanyl-D-glutamyl-meso-2,6-diaminopimeloyl-D-alanyl-D-alanine + UDP-N-acetyl-alpha-D-glucosamine = di-trans,octa-cis-undecaprenyl diphospho-[N-acetyl-alpha-D-glucosaminyl-(1-&gt;4)]-N-acetyl-alpha-D-muramoyl-L-alanyl-D-glutamyl-meso-2,6-diaminopimeloyl-D-alanyl-D-alanine + UDP + H(+). Its pathway is cell wall biogenesis; peptidoglycan biosynthesis. In terms of biological role, cell wall formation. Catalyzes the transfer of a GlcNAc subunit on undecaprenyl-pyrophosphoryl-MurNAc-pentapeptide (lipid intermediate I) to form undecaprenyl-pyrophosphoryl-MurNAc-(pentapeptide)GlcNAc (lipid intermediate II). This Thermotoga petrophila (strain ATCC BAA-488 / DSM 13995 / JCM 10881 / RKU-1) protein is UDP-N-acetylglucosamine--N-acetylmuramyl-(pentapeptide) pyrophosphoryl-undecaprenol N-acetylglucosamine transferase.